The following is a 331-amino-acid chain: Small ribosomal subunit protein uS2 (331 aa).

Belongs to the universal ribosomal protein uS2 family.

The polypeptide is Small ribosomal subunit protein uS2 (Bradyrhizobium diazoefficiens (strain JCM 10833 / BCRC 13528 / IAM 13628 / NBRC 14792 / USDA 110)).